The chain runs to 410 residues: Peptidase T (410 aa).

His-79 contacts Zn(2+). Residue Asp-81 is part of the active site. Asp-142 provides a ligand contact to Zn(2+). Residue Glu-176 is the Proton acceptor of the active site. Zn(2+) contacts are provided by Glu-177, Asp-199, and His-381.

Belongs to the peptidase M20B family. It depends on Zn(2+) as a cofactor.

The protein resides in the cytoplasm. The catalysed reaction is Release of the N-terminal residue from a tripeptide.. Its function is as follows. Cleaves the N-terminal amino acid of tripeptides. The sequence is that of Peptidase T from Bacillus velezensis (strain DSM 23117 / BGSC 10A6 / LMG 26770 / FZB42) (Bacillus amyloliquefaciens subsp. plantarum).